The primary structure comprises 435 residues: tRNA(Ile)-lysidine synthase (435 aa).

ATP is bound at residue 24–29 (SGGLDS).

It belongs to the tRNA(Ile)-lysidine synthase family.

The protein localises to the cytoplasm. The enzyme catalyses cytidine(34) in tRNA(Ile2) + L-lysine + ATP = lysidine(34) in tRNA(Ile2) + AMP + diphosphate + H(+). In terms of biological role, ligates lysine onto the cytidine present at position 34 of the AUA codon-specific tRNA(Ile) that contains the anticodon CAU, in an ATP-dependent manner. Cytidine is converted to lysidine, thus changing the amino acid specificity of the tRNA from methionine to isoleucine. The polypeptide is tRNA(Ile)-lysidine synthase (Chromobacterium violaceum (strain ATCC 12472 / DSM 30191 / JCM 1249 / CCUG 213 / NBRC 12614 / NCIMB 9131 / NCTC 9757 / MK)).